Here is a 220-residue protein sequence, read N- to C-terminus: Deoxyribose-phosphate aldolase (220 aa).

Residue aspartate 89 is the Proton donor/acceptor of the active site. Lysine 151 (schiff-base intermediate with acetaldehyde) is an active-site residue. Lysine 180 functions as the Proton donor/acceptor in the catalytic mechanism.

The protein belongs to the DeoC/FbaB aldolase family. DeoC type 1 subfamily.

It is found in the cytoplasm. The enzyme catalyses 2-deoxy-D-ribose 5-phosphate = D-glyceraldehyde 3-phosphate + acetaldehyde. Its pathway is carbohydrate degradation; 2-deoxy-D-ribose 1-phosphate degradation; D-glyceraldehyde 3-phosphate and acetaldehyde from 2-deoxy-alpha-D-ribose 1-phosphate: step 2/2. In terms of biological role, catalyzes a reversible aldol reaction between acetaldehyde and D-glyceraldehyde 3-phosphate to generate 2-deoxy-D-ribose 5-phosphate. The sequence is that of Deoxyribose-phosphate aldolase from Streptococcus pneumoniae serotype 19F (strain G54).